Here is a 311-residue protein sequence, read N- to C-terminus: tRNA dimethylallyltransferase (311 aa).

12 to 19 (GPTASGKT) provides a ligand contact to ATP. 14–19 (TASGKT) serves as a coordination point for substrate. 2 interaction with substrate tRNA regions span residues 37–40 (DSAM) and 161–165 (QRIQR).

Belongs to the IPP transferase family. In terms of assembly, monomer. Mg(2+) is required as a cofactor.

The enzyme catalyses adenosine(37) in tRNA + dimethylallyl diphosphate = N(6)-dimethylallyladenosine(37) in tRNA + diphosphate. Catalyzes the transfer of a dimethylallyl group onto the adenine at position 37 in tRNAs that read codons beginning with uridine, leading to the formation of N6-(dimethylallyl)adenosine (i(6)A). This is tRNA dimethylallyltransferase from Coxiella burnetii (strain Dugway 5J108-111).